Here is a 198-residue protein sequence, read N- to C-terminus: Small ribosomal subunit protein uS2 (198 aa).

Belongs to the universal ribosomal protein uS2 family.

The polypeptide is Small ribosomal subunit protein uS2 (rps2) (Methanothermobacter thermautotrophicus (strain ATCC 29096 / DSM 1053 / JCM 10044 / NBRC 100330 / Delta H) (Methanobacterium thermoautotrophicum)).